Reading from the N-terminus, the 360-residue chain is Protein OSB4, chloroplastic (360 aa).

The transit peptide at 1 to 61 directs the protein to the chloroplast; it reads MQFLGRSISK…AEKSSEEWPR (61 aa). The interval 28 to 64 is disordered; that stretch reads SQQFLSTSSTESSSRTRGGGGGNRAEKSSEEWPRPME. A compositionally biased stretch (low complexity) spans 33 to 43; it reads STSSTESSSRT. A compositionally biased stretch (basic and acidic residues) spans 51–61; it reads RAEKSSEEWPR. Residues 71 to 188 enclose the SSB domain; sequence IANSIDLIGY…VMVRDLHYIE (118 aa). 2 PDF region regions span residues 224-276 and 296-344; these read WFDL…SELK and WKDL…EKLP.

It is found in the plastid. The protein localises to the chloroplast. Functionally, binds single-stranded DNA. This Arabidopsis thaliana (Mouse-ear cress) protein is Protein OSB4, chloroplastic (OSB4).